The chain runs to 436 residues: Arginine-hydroxylase NDUFAF5, mitochondrial (436 aa).

The N-terminal 25 residues, Met-1 to Tyr-25, are a transit peptide targeting the mitochondrion. Residues Val-365–Lys-436 are disordered. Residues Gln-369–Gln-380 show a composition bias toward low complexity. 2 stretches are compositionally biased toward basic and acidic residues: residues Pro-391–Lys-411 and Gln-421–Lys-436.

It belongs to the methyltransferase superfamily.

The protein localises to the mitochondrion. In terms of biological role, involved in the assembly of mitochondrial NADH:ubiquinone oxidoreductase complex (complex I, MT-ND1) at early stages. Probably acts as an arginine hydroxylase. May also have methyltransferase activity. The chain is Arginine-hydroxylase NDUFAF5, mitochondrial from Dictyostelium discoideum (Social amoeba).